The primary structure comprises 167 residues: Telethonin (167 aa).

The residue at position 39 (Ser-39) is a Phosphoserine. A disordered region spans residues 144–167 (VPVSKPGALRRSLSRSMSQEAQRG). The segment covering 157–167 (SRSMSQEAQRG) has biased composition (polar residues).

In terms of assembly, interacts with MYOZ1, MYOZ2 and MYOZ3. Interacts with CSRP3. Interacts directly with the N-terminal Ig-like domains of 2 titin (TTN) molecules. Interacts with ANKRD2; the interaction is direct. In terms of tissue distribution, heart and skeletal muscle.

It is found in the cytoplasm. The protein localises to the myofibril. Its subcellular location is the sarcomere. In terms of biological role, muscle assembly regulating factor. Mediates the antiparallel assembly of titin (TTN) molecules at the sarcomeric Z-disk. In Homo sapiens (Human), this protein is Telethonin (TCAP).